A 156-amino-acid polypeptide reads, in one-letter code: Small ribosomal subunit protein uS7 (156 aa).

It belongs to the universal ribosomal protein uS7 family. As to quaternary structure, part of the 30S ribosomal subunit. Contacts proteins S9 and S11.

In terms of biological role, one of the primary rRNA binding proteins, it binds directly to 16S rRNA where it nucleates assembly of the head domain of the 30S subunit. Is located at the subunit interface close to the decoding center, probably blocks exit of the E-site tRNA. The polypeptide is Small ribosomal subunit protein uS7 (Beijerinckia indica subsp. indica (strain ATCC 9039 / DSM 1715 / NCIMB 8712)).